A 233-amino-acid chain; its full sequence is Sugar fermentation stimulation protein homolog (233 aa).

It belongs to the SfsA family.

The sequence is that of Sugar fermentation stimulation protein homolog from Acetivibrio thermocellus (strain ATCC 27405 / DSM 1237 / JCM 9322 / NBRC 103400 / NCIMB 10682 / NRRL B-4536 / VPI 7372) (Clostridium thermocellum).